Consider the following 191-residue polypeptide: Prostaglandin-H2 D-isomerase (191 aa).

A signal peptide spans 1–28 (MATPNRLWMALLLLGVLGVLQTPAPAQA). The N-linked (GlcNAc...) asparagine glycan is linked to asparagine 51. The active-site Nucleophile is the cysteine 65. The N-linked (GlcNAc...) asparagine glycan is linked to asparagine 78. Cysteine 89 and cysteine 186 are joined by a disulfide.

The protein belongs to the calycin superfamily. Lipocalin family. As to quaternary structure, monomer. In terms of tissue distribution, in the male reproductive system, expressed in the testis, epididymis and prostate, and secreted into the seminal fluid.

It is found in the rough endoplasmic reticulum. It localises to the nucleus membrane. Its subcellular location is the golgi apparatus. The protein resides in the cytoplasm. The protein localises to the perinuclear region. It is found in the secreted. It catalyses the reaction prostaglandin H2 = prostaglandin D2. Its function is as follows. Catalyzes the conversion of PGH2 to PGD2, a prostaglandin involved in smooth muscle contraction/relaxation and a potent inhibitor of platelet aggregation. Involved in a variety of CNS functions, such as sedation, NREM sleep and PGE2-induced allodynia, and may have an anti-apoptotic role in oligodendrocytes. Binds small non-substrate lipophilic molecules, including biliverdin, bilirubin, retinal, retinoic acid and thyroid hormone, and may act as a scavenger for harmful hydrophobic molecules and as a secretory retinoid and thyroid hormone transporter. Possibly involved in development and maintenance of the blood-brain, blood-retina, blood-aqueous humor and blood-testis barrier. It is likely to play important roles in both maturation and maintenance of the central nervous system and male reproductive system. Involved in PLA2G3-dependent maturation of mast cells. PLA2G3 is secreted by immature mast cells and acts on nearby fibroblasts upstream to PTDGS to synthesize PGD2, which in turn promotes mast cell maturation and degranulation via PTGDR. This chain is Prostaglandin-H2 D-isomerase (PTGDS), found in Bos taurus (Bovine).